A 67-amino-acid chain; its full sequence is Small ribosomal subunit protein eS17 (67 aa).

This sequence belongs to the eukaryotic ribosomal protein eS17 family.

This chain is Small ribosomal subunit protein eS17, found in Pyrococcus horikoshii (strain ATCC 700860 / DSM 12428 / JCM 9974 / NBRC 100139 / OT-3).